A 160-amino-acid polypeptide reads, in one-letter code: MRLQLIGIGRTKAGAERELTARYLERAGQAGRAIGFPSVELREIEESRARRGDERKAQEGKAIRALLQPASLIVAFDEHGRSIDSEGFADCLGQARDSGKAMMHFLIGGADGLEPALTESAAFVFAFGKMTWPHQLVRIMAAEQIYRAMTILGHHPYHRA.

S-adenosyl-L-methionine contacts are provided by residues Gly108 and Phe127–Trp132.

Belongs to the RNA methyltransferase RlmH family. Homodimer.

It is found in the cytoplasm. The catalysed reaction is pseudouridine(1915) in 23S rRNA + S-adenosyl-L-methionine = N(3)-methylpseudouridine(1915) in 23S rRNA + S-adenosyl-L-homocysteine + H(+). Its function is as follows. Specifically methylates the pseudouridine at position 1915 (m3Psi1915) in 23S rRNA. This chain is Ribosomal RNA large subunit methyltransferase H, found in Beijerinckia indica subsp. indica (strain ATCC 9039 / DSM 1715 / NCIMB 8712).